A 376-amino-acid chain; its full sequence is Riboflavin biosynthesis protein RibD (376 aa).

The tract at residues 1 to 150 (MEDFSEQQLF…QPYLYQRTHN (150 aa)) is deaminase. Residues 6–128 (EQQLFFMRRA…MLRQAGIQVY (123 aa)) enclose the CMP/dCMP-type deaminase domain. Histidine 55 contacts Zn(2+). Glutamate 57 (proton donor) is an active-site residue. Positions 80 and 89 each coordinate Zn(2+). A reductase region spans residues 151–376 (FPWTILKSAA…SPQVFEPIRN (226 aa)). Position 159 (alanine 159) interacts with NADP(+). Serine 173 contacts substrate. Position 175 (tryptophan 175) interacts with NADP(+). Arginine 189 is a substrate binding site. Residues threonine 201 and aspartate 205 each coordinate NADP(+). Leucine 209 and arginine 212 together coordinate substrate. Residue serine 230 coordinates NADP(+). Substrate is bound at residue glutamate 300. 302 to 308 (GTTLHTS) contacts NADP(+).

This sequence in the N-terminal section; belongs to the cytidine and deoxycytidylate deaminase family. It in the C-terminal section; belongs to the HTP reductase family. It depends on Zn(2+) as a cofactor.

It catalyses the reaction 2,5-diamino-6-hydroxy-4-(5-phosphoribosylamino)-pyrimidine + H2O + H(+) = 5-amino-6-(5-phospho-D-ribosylamino)uracil + NH4(+). The catalysed reaction is 5-amino-6-(5-phospho-D-ribitylamino)uracil + NADP(+) = 5-amino-6-(5-phospho-D-ribosylamino)uracil + NADPH + H(+). The protein operates within cofactor biosynthesis; riboflavin biosynthesis; 5-amino-6-(D-ribitylamino)uracil from GTP: step 2/4. It participates in cofactor biosynthesis; riboflavin biosynthesis; 5-amino-6-(D-ribitylamino)uracil from GTP: step 3/4. In terms of biological role, converts 2,5-diamino-6-(ribosylamino)-4(3h)-pyrimidinone 5'-phosphate into 5-amino-6-(ribosylamino)-2,4(1h,3h)-pyrimidinedione 5'-phosphate. The sequence is that of Riboflavin biosynthesis protein RibD (ribD) from Chlamydia pneumoniae (Chlamydophila pneumoniae).